The following is a 319-amino-acid chain: Coproporphyrin III ferrochelatase 2 (319 aa).

Fe-coproporphyrin III contacts are provided by residues Y13, R30, 46–47, S54, and Y125; that span reads RY. Positions 181 and 262 each coordinate Fe(2+).

It belongs to the ferrochelatase family.

Its subcellular location is the cytoplasm. It catalyses the reaction Fe-coproporphyrin III + 2 H(+) = coproporphyrin III + Fe(2+). It participates in porphyrin-containing compound metabolism; protoheme biosynthesis. Involved in coproporphyrin-dependent heme b biosynthesis. Catalyzes the insertion of ferrous iron into coproporphyrin III to form Fe-coproporphyrin III. The protein is Coproporphyrin III ferrochelatase 2 of Bacillus thuringiensis subsp. konkukian (strain 97-27).